We begin with the raw amino-acid sequence, 248 residues long: MFQKVEGIVIRTTDYGETNKIVTIFSRELGKVSAMARGSKKPKSRLASVSQLMTHGHFLIQMGSGLGTLQQGEIISTMKEIREDIFLTAYASFIVELTDKATEDKKHNPYLFEMLYQTLHYMCEGVDPEVLSLIYQTKMLPVLGMRPYFDTCAICHQETDFVAFSVREGGFLCSRHAEQDPYRIPVGEAVHKLLRLFFHFDLHRLGNVSVKDSTKKQMRLVLNTYYDEYCGIYLKSRRFLEQLDKFQI.

This sequence belongs to the RecO family.

Its function is as follows. Involved in DNA repair and RecF pathway recombination. This is DNA repair protein RecO from Bacillus cereus (strain B4264).